The sequence spans 144 residues: Large ribosomal subunit protein uL11 (144 aa).

It belongs to the universal ribosomal protein uL11 family. Part of the ribosomal stalk of the 50S ribosomal subunit. Interacts with L10 and the large rRNA to form the base of the stalk. L10 forms an elongated spine to which L12 dimers bind in a sequential fashion forming a multimeric L10(L12)X complex. In terms of processing, one or more lysine residues are methylated.

Functionally, forms part of the ribosomal stalk which helps the ribosome interact with GTP-bound translation factors. The polypeptide is Large ribosomal subunit protein uL11 (Marinomonas sp. (strain MWYL1)).